A 2844-amino-acid polypeptide reads, in one-letter code: Sodium channel protein 60E (2844 aa).

At 1–121 the chain is on the cytoplasmic side; that stretch reads MSDDQATFND…WSPARRVCVY (121 aa). Residues 107–434 form an I repeat; the sequence is FLFYPWSPAR…FDPSVLNVKK (328 aa). Residues 122–145 form a helical membrane-spanning segment; it reads IATNQFFDYCVMATILFNCIFLAM. Residues 146 to 151 are Extracellular-facing; the sequence is TETVEE. A helical transmembrane segment spans residues 152–172; that stretch reads AEYIFLAIYSIEMVIKIIAKG. Residues 173–183 are Cytoplasmic-facing; the sequence is FLLNKYTYLRN. The chain crosses the membrane as a helical span at residues 184-202; sequence PWNWLDFVVITSGYATIGM. The Extracellular portion of the chain corresponds to 203–208; the sequence is EVGNLA. A helical; Voltage-sensor membrane pass occupies residues 209 to 228; sequence GLRTFRVLRALKTVSIMPGL. At 229 to 244 the chain is on the cytoplasmic side; that stretch reads KTIINALLHSFRQLAE. A helical transmembrane segment spans residues 245 to 265; that stretch reads VMTLTIFCLMVFALFALQVYM. Residues 266-340 lie on the Extracellular side of the membrane; the sequence is GELRNKCVRQ…PNHGYTNFDN (75 aa). Cysteines 272 and 318 form a disulfide. 3 N-linked (GlcNAc...) asparagine glycosylation sites follow: Asn282, Asn293, and Asn311. The pore-forming intramembrane region spans 341-365; the sequence is FMWSMLTTFQLITLDYWENVYNMVL. Over 366–374 the chain is Extracellular; it reads ATCGPMSVS. Residues 375-395 traverse the membrane as a helical segment; it reads FFTVVVFFGSFYLINLMLAVV. Topologically, residues 396–687 are cytoplasmic; sequence ALSYEEEAEI…QNCLYKVVRD (292 aa). Residues 452–610 form a disordered region; it reads ASYSKKKTRR…QDTTNDMGHV (159 aa). A compositionally biased stretch (basic residues) spans 455–465; sequence SKKKTRRKKTK. The segment covering 469–479 has biased composition (gly residues); it reads EGGTNGNGNGS. Composition is skewed to low complexity over residues 511–520 and 577–586; these read QAQKQYQQME and SSNSSGVNRE. Residues 593-603 show a composition bias toward acidic residues; sequence GVVDDHEEQDT. One copy of the II repeat lies at 668–1130; it reads CTDYESWLQF…ESIELLGQYN (463 aa). Residues 688 to 708 traverse the membrane as a helical segment; sequence PLFELAITLCIVLNTAFLAME. The Extracellular segment spans residues 709-718; sequence HHGMSESFRN. Residues 719–743 form a helical membrane-spanning segment; sequence ALDVGNKVFTSIFTFECIVKLMALS. Topologically, residues 744 to 749 are cytoplasmic; that stretch reads KDFFLC. A helical transmembrane segment spans residues 750–769; the sequence is GWNIFDLLIVTASLLDIIFE. Residues 770–775 lie on the Extracellular side of the membrane; the sequence is LVDGLS. Residues 776–795 traverse the membrane as a helical; Voltage-sensor segment; it reads VLRGLRLLRVLKLAQSWTTM. The Cytoplasmic portion of the chain corresponds to 796-810; sequence KVLLSIIISTIGALG. The chain crosses the membrane as a helical span at residues 811 to 832; sequence NLTLILVIVIYIFAVIGMQLFS. The Extracellular segment spans residues 833 to 852; that stretch reads KDYTPEKFDPDPVPRWNFND. An intramembrane region (pore-forming) is located at residues 853–873; sequence FFHSFMMIFRILCGEWIEPLW. The Extracellular segment spans residues 874 to 889; that stretch reads DCMRAEEEQGASTCFA. Cys875 and Cys887 are oxidised to a cystine. Residues 890–910 traverse the membrane as a helical segment; it reads IFLPTLVMGNFMVLNLFLALL. The Cytoplasmic segment spans residues 911–1742; it reads LNSFNSEELK…SAKHWTRVRT (832 aa). Residues 1129-1157 are compositionally biased toward polar residues; it reads YNSTDTDPYANDQRSGCGSFNRGDSLQDN. Disordered regions lie at residues 1129–1166, 1185–1224, 1268–1288, 1577–1630, and 1635–1654; these read YNST…GSEE, YRKS…NSMS, ISNV…ENET, APTP…ADAS, and LAMA…ATQK. Positions 1191 to 1203 are enriched in low complexity; it reads RLSQSSGQSQRSL. Positions 1204–1213 are enriched in basic and acidic residues; sequence LKSEEAEMRR. Polar residues-rich tracts occupy residues 1277 to 1286, 1604 to 1618, and 1640 to 1654; these read PSSQMGQPEN, PQST…QSAR, and KTEQ…ATQK. An III repeat occupies 1723–2040; sequence PWFMSCMDTQ…QKHYYTAMKK (318 aa). The helical transmembrane segment at 1743 to 1763 threads the bilayer; it reads AVLTVVDTPAFEWFVLVLIFA. The Extracellular portion of the chain corresponds to 1764–1789; that stretch reads SSITLCFEDINLDKNKTLKRVLYWIN. Asn1778 and Asn1789 each carry an N-linked (GlcNAc...) asparagine glycan. Residues 1790 to 1810 traverse the membrane as a helical segment; sequence FSFCLIFVVEMILKWLALGFS. Topologically, residues 1811-1813 are cytoplasmic; sequence KYF. A helical membrane pass occupies residues 1814-1834; it reads TSFWTILDFIIVFVSVFSLLI. Residues 1835 to 1839 lie on the Extracellular side of the membrane; it reads EENEN. Residues 1840–1861 form a helical; Voltage-sensor membrane-spanning segment; sequence LKVLRSLRTLRALRPLRAISRW. The Cytoplasmic portion of the chain corresponds to 1862-1880; it reads QGMRIVVNALMYAIPSIFN. Residues 1881–1902 traverse the membrane as a helical segment; it reads VLLVCLVFWLIFSIMGVQFFGG. Topologically, residues 1903–1943 are extracellular; sequence KFFKCVNEMGELLPITEVNDKWDCIEQNYTWINSKITFDHV. Asn1930 is a glycosylation site (N-linked (GlcNAc...) asparagine). Positions 1944-1965 form an intramembrane region, pore-forming; sequence GMGYLALLQVATFEGWMEVMAD. Over 1966 to 1981 the chain is Extracellular; sequence AVDARGVDLQPQREAN. A helical membrane pass occupies residues 1982 to 2002; it reads LYAYIYFVIFIVCGSFFTLNL. Topologically, residues 2003–2069 are cytoplasmic; sequence FIGVIIDNFN…MFYDLSNSRR (67 aa). The stretch at 2050-2311 is one IV repeat; that stretch reads IKRPINHFLA…NMYIAIILEN (262 aa). The helical transmembrane segment at 2070-2090 threads the bilayer; it reads FEIAIFVLIFLNMLTMGIEHY. The Extracellular portion of the chain corresponds to 2091–2095; it reads DQPHA. The helical transmembrane segment at 2096 to 2116 threads the bilayer; sequence VFFILEVSNAFFTTVFGLEAI. Residues 2117–2132 lie on the Cytoplasmic side of the membrane; that stretch reads VKIVGLRYHYFTVPWN. The chain crosses the membrane as a helical span at residues 2133 to 2153; that stretch reads VFDFLLVLASIFGILMEDIMI. The Extracellular segment spans residues 2154–2162; sequence DLPISPTLL. The chain crosses the membrane as a helical; Voltage-sensor span at residues 2163 to 2184; it reads RVVRVFRIGRILRLIKAAKGIR. Residues 2185-2199 are Cytoplasmic-facing; it reads KLLFALVVSLPALFN. A helical membrane pass occupies residues 2200 to 2220; the sequence is IGALLGLITFIYAILGMSLFG. The Extracellular portion of the chain corresponds to 2221–2236; the sequence is NVKLQGALDDMVNFQT. Positions 2237–2259 form an intramembrane region, pore-forming; the sequence is FGRSMQLLFRLMTSAGWNDVLES. The Extracellular segment spans residues 2260 to 2288; it reads LMIQPPDCDPFIHGHTNGNCGHPLLAITY. A helical transmembrane segment spans residues 2289-2309; sequence FTSFIIISYMIVINMYIAIIL. Residues 2310–2844 lie on the Cytoplasmic side of the membrane; the sequence is ENFNQAHQEE…QFESLPDRQR (535 aa). The 30-residue stretch at 2441 to 2470 folds into the IQ domain; that stretch reads QEKAAKTIQTGWKEYLRRKREKERSNSGDS. Disordered regions lie at residues 2457 to 2479, 2584 to 2668, 2780 to 2802, and 2818 to 2844; these read RRKR…SPGG, SLTS…LSAQ, DSPK…GAPI, and NPEK…DRQR. Residues 2467–2479 are compositionally biased toward polar residues; it reads SGDSATQTSSPGG. A compositionally biased stretch (low complexity) spans 2595–2632; it reads AMNNTTNTTSNSASTSGTASSTATAPATGCGPAATSAS. Basic residues predominate over residues 2647-2658; the sequence is SRKRASSFIRKK. Over residues 2825–2836 the composition is skewed to polar residues; the sequence is DQGNGQDETAQF.

Belongs to the sodium channel (TC 1.A.1.10) family. NaCP60E subfamily. In embryonic and larval stages, expression is limited to very few non-neuronal cells in either the CNS or PNS. In pupal and adult stages, expressed in cell bodies of the fly central nervous system, including optic lobes, central brain, subesophageal ganglion, thoracico-abdominal ganglion, major olfactory organs, the third antennal segment and the maxillary palps.

Its subcellular location is the cell membrane. Its function is as follows. Mediates the voltage-dependent sodium ion permeability of excitable membranes. Plays a role in processing of olfactory information during the olfactory avoidance response. This is Sodium channel protein 60E (NaCP60E) from Drosophila melanogaster (Fruit fly).